Consider the following 302-residue polypeptide: tRNA pseudouridine synthase B (302 aa).

Catalysis depends on aspartate 47, which acts as the Nucleophile.

It belongs to the pseudouridine synthase TruB family. Type 1 subfamily.

It catalyses the reaction uridine(55) in tRNA = pseudouridine(55) in tRNA. Its function is as follows. Responsible for synthesis of pseudouridine from uracil-55 in the psi GC loop of transfer RNAs. This is tRNA pseudouridine synthase B from Methylobacillus flagellatus (strain ATCC 51484 / DSM 6875 / VKM B-1610 / KT).